Here is a 98-residue protein sequence, read N- to C-terminus: NADH-ubiquinone oxidoreductase chain 4L (98 aa).

Helical transmembrane passes span 2 to 22, 29 to 49, and 61 to 81; these read PSISTNITLAFTIALTGMLVF, SLLCLEGMMLAMFILSILFIM, and ILLLVLAACEAAIGLALLVMV.

This sequence belongs to the complex I subunit 4L family. Core subunit of respiratory chain NADH dehydrogenase (Complex I) which is composed of 45 different subunits.

It is found in the mitochondrion inner membrane. The catalysed reaction is a ubiquinone + NADH + 5 H(+)(in) = a ubiquinol + NAD(+) + 4 H(+)(out). Core subunit of the mitochondrial membrane respiratory chain NADH dehydrogenase (Complex I) which catalyzes electron transfer from NADH through the respiratory chain, using ubiquinone as an electron acceptor. Part of the enzyme membrane arm which is embedded in the lipid bilayer and involved in proton translocation. This chain is NADH-ubiquinone oxidoreductase chain 4L (MT-ND4L), found in Lepilemur sahamalazensis (Sahamalaza sportive lemur).